An 87-amino-acid chain; its full sequence is Small ribosomal subunit protein bS21m (87 aa).

The protein belongs to the bacterial ribosomal protein bS21 family. Component of the mitochondrial ribosome small subunit (28S) which comprises a 12S rRNA and about 30 distinct proteins.

The protein localises to the mitochondrion. The chain is Small ribosomal subunit protein bS21m (Mrps21) from Mus musculus (Mouse).